A 153-amino-acid chain; its full sequence is ATP synthase subunit b' (153 aa).

The chain crosses the membrane as a helical span at residues 20 to 40 (TLPLMAVQVVLLTFILNALFF).

The protein belongs to the ATPase B chain family. In terms of assembly, F-type ATPases have 2 components, F(1) - the catalytic core - and F(0) - the membrane proton channel. F(1) has five subunits: alpha(3), beta(3), gamma(1), delta(1), epsilon(1). F(0) has four main subunits: a(1), b(1), b'(1) and c(10-14). The alpha and beta chains form an alternating ring which encloses part of the gamma chain. F(1) is attached to F(0) by a central stalk formed by the gamma and epsilon chains, while a peripheral stalk is formed by the delta, b and b' chains.

The protein resides in the cellular thylakoid membrane. In terms of biological role, f(1)F(0) ATP synthase produces ATP from ADP in the presence of a proton or sodium gradient. F-type ATPases consist of two structural domains, F(1) containing the extramembraneous catalytic core and F(0) containing the membrane proton channel, linked together by a central stalk and a peripheral stalk. During catalysis, ATP synthesis in the catalytic domain of F(1) is coupled via a rotary mechanism of the central stalk subunits to proton translocation. Component of the F(0) channel, it forms part of the peripheral stalk, linking F(1) to F(0). The b'-subunit is a diverged and duplicated form of b found in plants and photosynthetic bacteria. The sequence is that of ATP synthase subunit b' from Prochlorococcus marinus (strain MIT 9211).